A 172-amino-acid chain; its full sequence is Putative phosphoesterase BT9727_1129 (172 aa).

Histidine 34 (proton donor) is an active-site residue. 2 short sequence motifs (HXTX) span residues 34-37 (HITL) and 115-118 (HLTI). The active-site Proton acceptor is histidine 115.

The protein belongs to the 2H phosphoesterase superfamily. YjcG family.

This Bacillus thuringiensis subsp. konkukian (strain 97-27) protein is Putative phosphoesterase BT9727_1129.